Reading from the N-terminus, the 159-residue chain is ATP synthase subunit b (159 aa).

A helical membrane pass occupies residues 7-27; sequence DFIWTLINFFVLLFILKILLY.

It belongs to the ATPase B chain family. F-type ATPases have 2 components, F(1) - the catalytic core - and F(0) - the membrane proton channel. F(1) has five subunits: alpha(3), beta(3), gamma(1), delta(1), epsilon(1). F(0) has three main subunits: a(1), b(2) and c(10-14). The alpha and beta chains form an alternating ring which encloses part of the gamma chain. F(1) is attached to F(0) by a central stalk formed by the gamma and epsilon chains, while a peripheral stalk is formed by the delta and b chains.

Its subcellular location is the cell membrane. F(1)F(0) ATP synthase produces ATP from ADP in the presence of a proton or sodium gradient. F-type ATPases consist of two structural domains, F(1) containing the extramembraneous catalytic core and F(0) containing the membrane proton channel, linked together by a central stalk and a peripheral stalk. During catalysis, ATP synthesis in the catalytic domain of F(1) is coupled via a rotary mechanism of the central stalk subunits to proton translocation. Its function is as follows. Component of the F(0) channel, it forms part of the peripheral stalk, linking F(1) to F(0). The protein is ATP synthase subunit b of Carboxydothermus hydrogenoformans (strain ATCC BAA-161 / DSM 6008 / Z-2901).